Reading from the N-terminus, the 518-residue chain is Probable glycosyltransferase At5g03795 (518 aa).

Residues Met-1 to Lys-25 are Cytoplasmic-facing. Residues Leu-26–Pro-46 traverse the membrane as a helical; Signal-anchor for type II membrane protein segment. At Lys-47–Val-518 the chain is on the lumenal side. 5 N-linked (GlcNAc...) asparagine glycosylation sites follow: Asn-104, Asn-113, Asn-120, Asn-282, and Asn-320.

This sequence belongs to the glycosyltransferase 47 family.

It localises to the golgi apparatus membrane. Its function is as follows. May be involved in cell wall biosynthesis. The polypeptide is Probable glycosyltransferase At5g03795 (Arabidopsis thaliana (Mouse-ear cress)).